Consider the following 101-residue polypeptide: MILEHVLVLSAYLFLIGLYGLITSRNMVRALMCLELILNAVNMNFVTFSDFFDNSQLKGDIFCIFVIAIAAAEAAIGLAIVSSIYRNRKSTRINQSTLLNK.

3 consecutive transmembrane segments (helical) span residues 2 to 22 (ILEH…YGLI), 32 to 52 (MCLE…SDFF), and 61 to 81 (IFCI…LAIV).

This sequence belongs to the complex I subunit 4L family. NDH is composed of at least 16 different subunits, 5 of which are encoded in the nucleus.

The protein localises to the plastid. It is found in the chloroplast thylakoid membrane. The enzyme catalyses a plastoquinone + NADH + (n+1) H(+)(in) = a plastoquinol + NAD(+) + n H(+)(out). It carries out the reaction a plastoquinone + NADPH + (n+1) H(+)(in) = a plastoquinol + NADP(+) + n H(+)(out). Its function is as follows. NDH shuttles electrons from NAD(P)H:plastoquinone, via FMN and iron-sulfur (Fe-S) centers, to quinones in the photosynthetic chain and possibly in a chloroplast respiratory chain. The immediate electron acceptor for the enzyme in this species is believed to be plastoquinone. Couples the redox reaction to proton translocation, and thus conserves the redox energy in a proton gradient. The chain is NAD(P)H-quinone oxidoreductase subunit 4L, chloroplastic from Lepidium virginicum (Virginia pepperweed).